The primary structure comprises 318 residues: Myeloid-associated differentiation marker (318 aa).

MARVEL domains lie at 25-157 (ALTQ…ARPG) and 162-315 (YMAT…RLVF). 8 helical membrane passes run 35–55 (LLQL…GAWT), 58–78 (MGNW…IILI), 95–115 (FPIT…IIYP), 131–151 (AIAA…EVAW), 165–185 (TVPG…FAFI), 197–217 (LEWC…TVLL), 233–253 (FLSG…VLWP), and 290–310 (LAVS…LVYS).

The protein belongs to the MAL family.

It is found in the membrane. This chain is Myeloid-associated differentiation marker (Myadm), found in Rattus norvegicus (Rat).